A 72-amino-acid polypeptide reads, in one-letter code: Cell division protein ZapB (72 aa).

Residues 3 to 71 adopt a coiled-coil conformation; the sequence is LSIIDQLEEK…LRSLLGQIDN (69 aa).

Belongs to the ZapB family. As to quaternary structure, homodimer. The ends of the coiled-coil dimer bind to each other, forming polymers. Interacts with FtsZ.

It is found in the cytoplasm. Non-essential, abundant cell division factor that is required for proper Z-ring formation. It is recruited early to the divisome by direct interaction with FtsZ, stimulating Z-ring assembly and thereby promoting cell division earlier in the cell cycle. Its recruitment to the Z-ring requires functional FtsA or ZipA. The chain is Cell division protein ZapB from Haemophilus ducreyi (strain 35000HP / ATCC 700724).